A 463-amino-acid polypeptide reads, in one-letter code: tRNA modification GTPase MnmE (463 aa).

Arginine 27, glutamate 92, and lysine 131 together coordinate (6S)-5-formyl-5,6,7,8-tetrahydrofolate. The region spanning 234-386 (GIKLAIVGKP…LEDHLLKIYS (153 aa)) is the TrmE-type G domain. Asparagine 244 provides a ligand contact to K(+). GTP-binding positions include 244 to 249 (NVGKSS), 263 to 269 (TNVAGTT), and 288 to 291 (DTAG). Serine 248 provides a ligand contact to Mg(2+). K(+) is bound by residues threonine 263, valine 265, and threonine 268. Threonine 269 contacts Mg(2+). Lysine 463 lines the (6S)-5-formyl-5,6,7,8-tetrahydrofolate pocket.

This sequence belongs to the TRAFAC class TrmE-Era-EngA-EngB-Septin-like GTPase superfamily. TrmE GTPase family. In terms of assembly, homodimer. Heterotetramer of two MnmE and two MnmG subunits. K(+) serves as cofactor.

Its subcellular location is the cytoplasm. In terms of biological role, exhibits a very high intrinsic GTPase hydrolysis rate. Involved in the addition of a carboxymethylaminomethyl (cmnm) group at the wobble position (U34) of certain tRNAs, forming tRNA-cmnm(5)s(2)U34. The chain is tRNA modification GTPase MnmE from Mycoplasmopsis synoviae (strain 53) (Mycoplasma synoviae).